The primary structure comprises 305 residues: Sulfate adenylyltransferase subunit 2 (305 aa).

Belongs to the PAPS reductase family. CysD subfamily. Heterodimer composed of CysD, the smaller subunit, and CysN.

The enzyme catalyses sulfate + ATP + H(+) = adenosine 5'-phosphosulfate + diphosphate. Its pathway is sulfur metabolism; hydrogen sulfide biosynthesis; sulfite from sulfate: step 1/3. Its function is as follows. With CysN forms the ATP sulfurylase (ATPS) that catalyzes the adenylation of sulfate producing adenosine 5'-phosphosulfate (APS) and diphosphate, the first enzymatic step in sulfur assimilation pathway. APS synthesis involves the formation of a high-energy phosphoric-sulfuric acid anhydride bond driven by GTP hydrolysis by CysN coupled to ATP hydrolysis by CysD. The sequence is that of Sulfate adenylyltransferase subunit 2 from Pseudomonas putida (strain ATCC 700007 / DSM 6899 / JCM 31910 / BCRC 17059 / LMG 24140 / F1).